Here is a 302-residue protein sequence, read N- to C-terminus: 4-hydroxy-tetrahydrodipicolinate synthase (302 aa).

Thr-46 serves as a coordination point for pyruvate. Tyr-134 acts as the Proton donor/acceptor in catalysis. The Schiff-base intermediate with substrate role is filled by Lys-162. Residue Val-204 participates in pyruvate binding.

This sequence belongs to the DapA family. As to quaternary structure, homotetramer; dimer of dimers.

It is found in the cytoplasm. It catalyses the reaction L-aspartate 4-semialdehyde + pyruvate = (2S,4S)-4-hydroxy-2,3,4,5-tetrahydrodipicolinate + H2O + H(+). It functions in the pathway amino-acid biosynthesis; L-lysine biosynthesis via DAP pathway; (S)-tetrahydrodipicolinate from L-aspartate: step 3/4. Functionally, catalyzes the condensation of (S)-aspartate-beta-semialdehyde [(S)-ASA] and pyruvate to 4-hydroxy-tetrahydrodipicolinate (HTPA). This is 4-hydroxy-tetrahydrodipicolinate synthase from Xylella fastidiosa (strain Temecula1 / ATCC 700964).